The primary structure comprises 191 residues: CASP-like protein 1D1 (191 aa).

The Cytoplasmic segment spans residues 1–22 (MTSTSKDTPESGYAVPPPNLFG). A helical membrane pass occupies residues 23-43 (VDFGLRLLLLASAVSALVVLV). Residues 44–73 (TSKQTESIPTSLPPPFPAFISRDAKFQHSP) are Extracellular-facing. A helical transmembrane segment spans residues 74-94 (AFIYLLVALSVTCFYSIITMV). At 95–118 (ASFAAITSPSSSPRMLFHLVLSDA) the chain is on the cytoplasmic side. Residues 119 to 139 (VMAGVMASAAGTAGSVAYLGL) traverse the membrane as a helical segment. Residues 140–160 (KGNSHVNWNKVCNVYDKFCRH) are Extracellular-facing. A helical transmembrane segment spans residues 161-181 (VGSSAAVSLVASVLLVSLVVL). The Cytoplasmic segment spans residues 182–191 (SSYSLYRRCR).

It belongs to the Casparian strip membrane proteins (CASP) family. In terms of assembly, homodimer and heterodimers.

The protein localises to the cell membrane. The sequence is that of CASP-like protein 1D1 from Musa acuminata (Banana).